The following is a 162-amino-acid chain: Nucleotide-binding protein ABSDF0503 (162 aa).

It belongs to the YajQ family.

In terms of biological role, nucleotide-binding protein. This is Nucleotide-binding protein ABSDF0503 from Acinetobacter baumannii (strain SDF).